Reading from the N-terminus, the 198-residue chain is 3-isopropylmalate dehydratase small subunit (198 aa).

It belongs to the LeuD family. LeuD type 1 subfamily. Heterodimer of LeuC and LeuD.

It carries out the reaction (2R,3S)-3-isopropylmalate = (2S)-2-isopropylmalate. It functions in the pathway amino-acid biosynthesis; L-leucine biosynthesis; L-leucine from 3-methyl-2-oxobutanoate: step 2/4. Functionally, catalyzes the isomerization between 2-isopropylmalate and 3-isopropylmalate, via the formation of 2-isopropylmaleate. The chain is 3-isopropylmalate dehydratase small subunit from Colwellia psychrerythraea (strain 34H / ATCC BAA-681) (Vibrio psychroerythus).